Here is a 453-residue protein sequence, read N- to C-terminus: MGEKKPETLDFVKDFQEYLTQQTHHVNMISGSVSSDKEAETLQGGTQNHDALSANSPCLALPAAATDSDQNGLDHPSVEVSLDESAGMLVDGFERTFDGKLKCRYCNYASKGTARLIEHIRIHTGEKPHRCHLCPFASAYERHLEAHMRSHTGEKPYKCELCSFRCSDRSNLSHHRRRKHKMLPIKGTRPSLGNKKMWGVLQKKVSSLGYTRRTLINLSPPSMVVHKADYLSDFAHEIPSIQSEAYEHLAKASHSVGLSRDPQELMVDNPLNQLSTLAGQLSSLPPDTQNPASPDTGPCPDEKPFMIQQPPPPACSSAVSTSVAQSSSPASPEGRPSHNHRNCSPMAGPSSERSGRTSTPSISNSQPSTPAPALPVQDPQLLHHCQHCDMYFADNILYTIHMGCHGFENPFQCNICGCKCKNKYDFACHFARGACCQHSSRCAFRRTDDHVTK.

3 C2H2-type zinc fingers span residues 101–123 (LKCR…IRIH), 129–151 (HRCH…MRSH), and 157–180 (YKCE…RRKH). Over residues 279-293 (GQLSSLPPDTQNPAS) the composition is skewed to polar residues. Residues 279 to 375 (GQLSSLPPDT…QPSTPAPALP (97 aa)) are disordered. A compositionally biased stretch (low complexity) spans 315 to 332 (CSSAVSTSVAQSSSPASP). The segment covering 356–368 (RTSTPSISNSQPS) has biased composition (polar residues). C2H2-type zinc fingers lie at residues 383–405 (HHCQ…MGCH) and 411–438 (FQCN…CCQH).

It belongs to the Ikaros C2H2-type zinc-finger protein family. Probably self-associates.

It localises to the nucleus. Transcriptional repressor that binds the core 5'GNNTGTNG-3' DNA consensus sequence. The protein is Zinc finger protein Pegasus (ikzf5) of Xenopus laevis (African clawed frog).